We begin with the raw amino-acid sequence, 235 residues long: Uridylate kinase (235 aa).

An ATP-binding site is contributed by 9–12 (KLSG). The segment at 17-22 (GNQGYG) is involved in allosteric activation by GTP. UMP is bound at residue glycine 51. Positions 52 and 56 each coordinate ATP. Residues aspartate 71 and 132-139 (CGNPFFTT) contribute to the UMP site. Residues threonine 159, tyrosine 165, and aspartate 168 each contribute to the ATP site.

This sequence belongs to the UMP kinase family. Homohexamer.

It is found in the cytoplasm. The enzyme catalyses UMP + ATP = UDP + ADP. It functions in the pathway pyrimidine metabolism; CTP biosynthesis via de novo pathway; UDP from UMP (UMPK route): step 1/1. With respect to regulation, allosterically activated by GTP. Inhibited by UTP. Catalyzes the reversible phosphorylation of UMP to UDP. The chain is Uridylate kinase from Synechococcus sp. (strain CC9311).